Consider the following 809-residue polypeptide: Chorion peroxidase (809 aa).

An N-terminal signal peptide occupies residues 1 to 21 (MSRILFILLLLIVTQLSELQA). A propeptide spanning residues 22–223 (AAFSVRQNRF…KFTETPLAHH (202 aa)) is cleaved from the precursor. The tract at residues 36–55 (DLQTPAPLATSTESSKKPEK) is disordered. Residue Asn110 is glycosylated (N-linked (GlcNAc...) asparagine). At Cys224 the chain carries N-acetylcysteine; in Chorion peroxidase light chain. Cys230 and Cys244 are disulfide-bonded. His320 (proton acceptor) is an active-site residue. An intrachain disulfide couples Cys448 to Cys457. His568 lines the heme b pocket. Cys765 and Cys794 are oxidised to a cystine.

The protein belongs to the peroxidase family. XPO subfamily. As to quaternary structure, heterodimer. Requires heme b as cofactor. Expressed at low levels in the germarium and early follicles. Expression becomes progressively stronger during vitellogenesis, and is highly expressed in germ cells and somatic cells. A subset of follicle cells, termed border cells (BC), exhibit a high level of expression.

The protein resides in the secreted. It carries out the reaction 2 a phenolic donor + H2O2 = 2 a phenolic radical donor + 2 H2O. Its function is as follows. Required for ovarian follicle maturation. Involved in the formation of a rigid and insoluble egg chorion by catalyzing chorion protein cross-linking through dityrosine formation and phenol oxidase-catalyzed chorion melanization. The sequence is that of Chorion peroxidase (Pxt) from Drosophila melanogaster (Fruit fly).